A 103-amino-acid polypeptide reads, in one-letter code: Glycoprotein 24B (103 aa).

The protein belongs to the csb family. In terms of processing, O-glycosylated.

The protein resides in the cell surface. Functionally, cell-cell adhesion during early development. The protein is Glycoprotein 24B (csbB) of Dictyostelium discoideum (Social amoeba).